Consider the following 180-residue polypeptide: Cell division protein ZapC (180 aa).

Belongs to the ZapC family. As to quaternary structure, interacts directly with FtsZ.

Its subcellular location is the cytoplasm. Functionally, contributes to the efficiency of the cell division process by stabilizing the polymeric form of the cell division protein FtsZ. Acts by promoting interactions between FtsZ protofilaments and suppressing the GTPase activity of FtsZ. This chain is Cell division protein ZapC, found in Vibrio cholerae serotype O1 (strain ATCC 39315 / El Tor Inaba N16961).